The following is a 672-amino-acid chain: DNA ligase (672 aa).

Residues 35–39 (DAEYD), 84–85 (SL), and Glu116 contribute to the NAD(+) site. Lys118 (N6-AMP-lysine intermediate) is an active-site residue. NAD(+)-binding residues include Arg139, Glu179, Lys295, and Lys319. Zn(2+) contacts are provided by Cys413, Cys416, Cys431, and Cys436. The BRCT domain maps to 593 to 672 (PRSAPLTGKT…EEFLRLAGKI (80 aa)).

Belongs to the NAD-dependent DNA ligase family. LigA subfamily. Mg(2+) is required as a cofactor. It depends on Mn(2+) as a cofactor.

It carries out the reaction NAD(+) + (deoxyribonucleotide)n-3'-hydroxyl + 5'-phospho-(deoxyribonucleotide)m = (deoxyribonucleotide)n+m + AMP + beta-nicotinamide D-nucleotide.. In terms of biological role, DNA ligase that catalyzes the formation of phosphodiester linkages between 5'-phosphoryl and 3'-hydroxyl groups in double-stranded DNA using NAD as a coenzyme and as the energy source for the reaction. It is essential for DNA replication and repair of damaged DNA. In Syntrophus aciditrophicus (strain SB), this protein is DNA ligase.